We begin with the raw amino-acid sequence, 73 residues long: Large ribosomal subunit protein bL31 (73 aa).

The Zn(2+) site is built by Cys-16, Cys-18, Cys-37, and Cys-40.

The protein belongs to the bacterial ribosomal protein bL31 family. Type A subfamily. In terms of assembly, part of the 50S ribosomal subunit. Requires Zn(2+) as cofactor.

Functionally, binds the 23S rRNA. The chain is Large ribosomal subunit protein bL31 from Hamiltonella defensa subsp. Acyrthosiphon pisum (strain 5AT).